We begin with the raw amino-acid sequence, 56 residues long: Large ribosomal subunit protein bL33 (56 aa).

This sequence belongs to the bacterial ribosomal protein bL33 family.

The sequence is that of Large ribosomal subunit protein bL33 from Rickettsia bellii (strain OSU 85-389).